The sequence spans 316 residues: MRSVDSRSSVTRWVCLTSVILFCFCIAVMRYGGVKKRRYFYGFCLHPRERADITEVILRFPREERNASRELRWVKKDRQWFIQLAHAIHPAKQEVLERLFQYLFTKRRFEFITNNTRFFSDYALGKQPAVQMKFTKKNGAAIGDIYFGALNGTGLGRYIRIGDNAAVFLTEDDFTPFFRDEKRFWCDTRQFHELFTQSQIQMMEVSGKYIVRSRTSVVFKEVEQFFARFSYVDVGPTPTQWKESIVIHRGDGKIIRFRLQPAAHQEWTLWDAQSVHAYTLSAYTARYLFALISRMQTETGMSSLQQFDTEENLISD.

The chain crosses the membrane as a helical span at residues 12 to 34 (RWVCLTSVILFCFCIAVMRYGGV).

Its subcellular location is the membrane. This is an uncharacterized protein from Treponema pallidum (strain Nichols).